The following is a 545-amino-acid chain: Membrane protein insertase YidC (545 aa).

6 helical membrane-spanning segments follow: residues 10-30 (AVYL…FLFS), 319-339 (LLYF…NVIP), 341-361 (WGLS…PLTF), 407-427 (IGGC…YGLV), 467-487 (ILPF…SNVS), and 502-522 (MPIM…IYWI).

The protein belongs to the OXA1/ALB3/YidC family. Type 1 subfamily. As to quaternary structure, interacts with the Sec translocase complex via SecD. Specifically interacts with transmembrane segments of nascent integral membrane proteins during membrane integration.

Its subcellular location is the cell inner membrane. Functionally, required for the insertion and/or proper folding and/or complex formation of integral membrane proteins into the membrane. Involved in integration of membrane proteins that insert both dependently and independently of the Sec translocase complex, as well as at least some lipoproteins. Aids folding of multispanning membrane proteins. The protein is Membrane protein insertase YidC of Borrelia recurrentis (strain A1).